The sequence spans 92 residues: Phospholemman (92 aa).

Positions 1-20 are cleaved as a signal peptide; sequence MASPGHILIVCVCLLSMASA. The Extracellular segment spans residues 21-35; that stretch reads EAPQEPDPFTYDYHT. A helical membrane pass occupies residues 36-56; it reads LRIGGLTIAGILFILGILIIL. Residues 57–92 lie on the Cytoplasmic side of the membrane; the sequence is SKRCRCKFNQQQRTGEPDEEEGTFRSSIRRLSTRRR. Residue C60 is the site of S-palmitoyl cysteine attachment. The residue at position 62 (C62) is an S-glutathionyl cysteine; alternate. The S-palmitoyl cysteine; alternate moiety is linked to residue C62. Residues 66–92 are disordered; sequence QQQRTGEPDEEEGTFRSSIRRLSTRRR. T79 bears the Phosphothreonine mark. Phosphoserine is present on S82. Phosphoserine; by PKA and PKC is present on S83. Positions 83-92 are enriched in basic residues; sequence SIRRLSTRRR. S88 bears the Phosphoserine; by PKA mark. The residue at position 89 (T89) is a Phosphothreonine; by PKC.

It belongs to the FXYD family. As to quaternary structure, homotetramer. Monomer. Regulatory subunit of the sodium/potassium-transporting ATPase (NKA) which is composed of a catalytic alpha subunit, a non-catalytic beta subunit and an additional regulatory subunit. The monomeric form associates with NKA while the oligomeric form does not. Interacts with the catalytic alpha-1 subunit ATP1A1. Also interacts with the catalytic alpha-2 and alpha-3 subunits ATP1A2 and ATP1A3. Very little interaction with ATP1A1, ATP1A2 or ATP1A3 when phosphorylated at Ser-83. Interacts with the non-catalytic beta-1 subunit ATP1B1. Oxidative stress decreases interaction with ATP1A1 but increases interaction with ATP1B1. In terms of processing, major plasma membrane substrate for cAMP-dependent protein kinase (PKA) and protein kinase C (PKC) in several different tissues. Phosphorylated in response to insulin and adrenergic stimulation. Phosphorylation at Ser-88 stimulates sodium/potassium-transporting ATPase activity while the unphosphorylated form inhibits sodium/potassium-transporting ATPase activity. Phosphorylation increases tetramerization, decreases binding to ATP1A1 and reduces inhibition of ATP1A1 activity. Phosphorylation at Ser-83 leads to greatly reduced interaction with ATP1A1, ATP1A2 and ATP1A3. May be phosphorylated by DMPK. Post-translationally, palmitoylation increases half-life and stability and is enhanced upon phosphorylation at Ser-88 by PKA. In adult brain, highest levels are found in the cerebellum and in the lateral, third and fourth ventricles of the choroid plexus (at protein level). Also detected in cells of a portion of the ependymal lining of the lateral ventricle on its rostral surface posterior to the caudate putamen (at protein level). Expressed in a subset of neurons which secrete gonadotropin-releasing hormone.

Its subcellular location is the cell membrane. The protein resides in the sarcolemma. It localises to the apical cell membrane. It is found in the membrane. The protein localises to the caveola. Its subcellular location is the T-tubule. Associates with and regulates the activity of the sodium/potassium-transporting ATPase (NKA) which transports Na(+) out of the cell and K(+) into the cell. Inhibits NKA activity in its unphosphorylated state and stimulates activity when phosphorylated. Reduces glutathionylation of the NKA beta-1 subunit ATP1B1, thus reversing glutathionylation-mediated inhibition of ATP1B1. Contributes to female sexual development by maintaining the excitability of neurons which secrete gonadotropin-releasing hormone. This is Phospholemman from Rattus norvegicus (Rat).